The sequence spans 311 residues: MNETIQPCEHDGDTWLILNGKSAQLPEVREAVGRVREAGHHLAVRVTWEGGDGVRLAREASEAGIARVIAGGGDGTVNEIVGGLMQLASETRPALGILPLGSANDFAGGLGLPEEPYEALRVALETPPRRVDVGTLGDDYFINLASGGFGAQITNSTPAPLKRLLGGGAYSLMGMLKAWNYQPYQGRLRFPDGERNVPLFLLALGNGCQAGGGQQLAPLAKIDDGLLELLIVRHFTSLREMKQLIDELENLPESGDFVEYLQVPWVEFESEHALPLNLDGEPCFHENFRAALMPGALCLAAPEGSALLSHQ.

The 132-residue stretch at 9–140 folds into the DAGKc domain; the sequence is EHDGDTWLIL…VDVGTLGDDY (132 aa). Residues Thr-47, 73-79, and Ser-102 each bind ATP; that span reads GDGTVNE. Mg(2+) is bound by residues Lys-221, Asp-224, and Leu-226. The active-site Proton acceptor is the Glu-281.

The protein belongs to the diacylglycerol/lipid kinase family. YegS lipid kinase subfamily. Mg(2+) serves as cofactor. Requires Ca(2+) as cofactor.

Its subcellular location is the cytoplasm. Probably phosphorylates lipids; the in vivo substrate is unknown. This Chromohalobacter salexigens (strain ATCC BAA-138 / DSM 3043 / CIP 106854 / NCIMB 13768 / 1H11) protein is Probable lipid kinase YegS-like.